The chain runs to 414 residues: Esterase FrsA (414 aa).

It belongs to the FrsA family.

It catalyses the reaction a carboxylic ester + H2O = an alcohol + a carboxylate + H(+). Catalyzes the hydrolysis of esters. This Shigella flexneri serotype 5b (strain 8401) protein is Esterase FrsA.